Here is a 618-residue protein sequence, read N- to C-terminus: F-box/LRR-repeat protein At3g58940 (618 aa).

The 47-residue stretch at 1 to 47 folds into the F-box domain; sequence MDRVSNLPEEVRCHILSFLPTKHAALTSVLSKSWLNLWKFETNLDID. LRR repeat units follow at residues 147–176, 196–223, 224–249, 282–313, 314–339, and 354–379; these read LKLR…NIDS, EVHM…SIHG, TGVE…NYSD, TLYL…GLKS, DEGR…IIEG, and CISR…GFRG. Positions 587 to 618 are disordered; that stretch reads ATDSERAETSSNQEMTELGQATATYFPPREGE. Polar residues predominate over residues 595-609; the sequence is TSSNQEMTELGQATA.

This is F-box/LRR-repeat protein At3g58940 from Arabidopsis thaliana (Mouse-ear cress).